A 297-amino-acid chain; its full sequence is Large ribosomal subunit protein uL18 (297 aa).

Glycine 2 is subject to N-acetylglycine. N6-acetyllysine is present on residues lysine 5 and lysine 48. Serine 185 is modified (phosphoserine). Residue lysine 220 is modified to N6-acetyllysine; alternate. Lysine 220 is covalently cross-linked (Glycyl lysine isopeptide (Lys-Gly) (interchain with G-Cter in SUMO1); alternate). Residue lysine 220 forms a Glycyl lysine isopeptide (Lys-Gly) (interchain with G-Cter in SUMO2); alternate linkage. A Phosphothreonine modification is found at threonine 232. The interval 252–297 is disordered; that stretch reads VYEKKPKKEVKKKRWNRPKMSLAQKKDRVAQKKASFLRAQERAAES. The segment covering 258 to 268 has biased composition (basic residues); that stretch reads KKEVKKKRWNR. A Phosphoserine modification is found at serine 272.

This sequence belongs to the universal ribosomal protein uL18 family. Component of the large ribosomal subunit (LSU). Part of the 5S RNP complex, which is a LSU subcomplex composed of the 5S RNA, RPL5 and RPL11. Component of a hexameric 5S RNP precursor complex, composed of 5S RNA, RRS1, RPF2/BXDC1, RPL5, RPL11 and HEATR3; this complex acts as a precursor for ribosome assembly. Interacts with NVL in an ATP-dependent manner. Interacts with RRP1B. Interacts with IPO5, IPO7 and KPNB1; these interactions may be involved in RPL5 nuclear import for the assembly of ribosomal subunits.

It localises to the cytoplasm. The protein localises to the nucleus. The protein resides in the nucleolus. Its function is as follows. Component of the ribosome, a large ribonucleoprotein complex responsible for the synthesis of proteins in the cell. The small ribosomal subunit (SSU) binds messenger RNAs (mRNAs) and translates the encoded message by selecting cognate aminoacyl-transfer RNA (tRNA) molecules. The large subunit (LSU) contains the ribosomal catalytic site termed the peptidyl transferase center (PTC), which catalyzes the formation of peptide bonds, thereby polymerizing the amino acids delivered by tRNAs into a polypeptide chain. The nascent polypeptides leave the ribosome through a tunnel in the LSU and interact with protein factors that function in enzymatic processing, targeting, and the membrane insertion of nascent chains at the exit of the ribosomal tunnel. As part of the 5S RNP/5S ribonucleoprotein particle it is an essential component of the LSU, required for its formation and the maturation of rRNAs. It also couples ribosome biogenesis to p53/TP53 activation. As part of the 5S RNP it accumulates in the nucleoplasm and inhibits MDM2, when ribosome biogenesis is perturbed, mediating the stabilization and the activation of TP53. This Bos taurus (Bovine) protein is Large ribosomal subunit protein uL18 (RPL5).